A 204-amino-acid chain; its full sequence is Thymidylate kinase (204 aa).

11-18 serves as a coordination point for ATP; it reads GLDKSGKT.

Belongs to the thymidylate kinase family.

It catalyses the reaction dTMP + ATP = dTDP + ADP. It participates in pyrimidine metabolism; dTTP biosynthesis. The protein is Thymidylate kinase (TMK) of Cowpox virus (strain GRI-90 / Grishak) (CPV).